A 363-amino-acid chain; its full sequence is 3-isopropylmalate dehydrogenase (363 aa).

Residue 78-91 (GPKWEHLPPDQQPE) participates in NAD(+) binding. Residues R99, R109, R138, and D227 each coordinate substrate. Mg(2+)-binding residues include D227, D251, and D255. Residue 285–297 (GSAPDIAGKNIAN) participates in NAD(+) binding.

The protein belongs to the isocitrate and isopropylmalate dehydrogenases family. LeuB type 1 subfamily. As to quaternary structure, homodimer. Mg(2+) serves as cofactor. Mn(2+) is required as a cofactor.

It localises to the cytoplasm. It carries out the reaction (2R,3S)-3-isopropylmalate + NAD(+) = 4-methyl-2-oxopentanoate + CO2 + NADH. The protein operates within amino-acid biosynthesis; L-leucine biosynthesis; L-leucine from 3-methyl-2-oxobutanoate: step 3/4. Functionally, catalyzes the oxidation of 3-carboxy-2-hydroxy-4-methylpentanoate (3-isopropylmalate) to 3-carboxy-4-methyl-2-oxopentanoate. The product decarboxylates to 4-methyl-2 oxopentanoate. The protein is 3-isopropylmalate dehydrogenase of Shigella sonnei (strain Ss046).